Reading from the N-terminus, the 367-residue chain is Leucine carboxyl methyltransferase 1 (367 aa).

Residues Arg-84, Gly-109, Asp-132, 187–188 (DL), and Glu-212 contribute to the S-adenosyl-L-methionine site.

It belongs to the methyltransferase superfamily. LCMT family.

The catalysed reaction is [phosphatase 2A protein]-C-terminal L-leucine + S-adenosyl-L-methionine = [phosphatase 2A protein]-C-terminal L-leucine methyl ester + S-adenosyl-L-homocysteine. Methylates the carboxyl group of the C-terminal leucine residue of protein phosphatase 2A catalytic subunits to form alpha-leucine ester residues. In Candida albicans (strain SC5314 / ATCC MYA-2876) (Yeast), this protein is Leucine carboxyl methyltransferase 1 (PPM1).